A 231-amino-acid chain; its full sequence is Casparian strip membrane protein 1 (231 aa).

The Cytoplasmic segment spans residues 1–69 (MSTSETATVI…FRQSDRGSRC (69 aa)). The chain crosses the membrane as a helical span at residues 70–90 (LAFLDFLLRIAAFGPALAAAI). The Extracellular segment spans residues 91–117 (ATGTSDETLSVFTEFFQFRARFDDFPA). Residues 118–138 (FLFLMVANAIAAGYLVLSLPF) form a helical membrane-spanning segment. Over 139–152 (SAVVVLRPQATGLR) the chain is Cytoplasmic. The chain crosses the membrane as a helical span at residues 153-173 (LLLLVCDTIMIGLLTAAAAAA). Topologically, residues 174–207 (AAIVELAHNGNERANWVAICMQFHGFCQRTSGAV) are extracellular. Residues 208 to 228 (VASFLSVFLFLLLVVLAAFAI) traverse the membrane as a helical segment. Topologically, residues 229 to 231 (RKR) are cytoplasmic.

This sequence belongs to the Casparian strip membrane proteins (CASP) family. As to quaternary structure, homodimer and heterodimers.

It is found in the cell membrane. Regulates membrane-cell wall junctions and localized cell wall deposition. Required for establishment of the Casparian strip membrane domain (CSD) and the subsequent formation of Casparian strips, a cell wall modification of the root endodermis that determines an apoplastic barrier between the intraorganismal apoplasm and the extraorganismal apoplasm and prevents lateral diffusion. The protein is Casparian strip membrane protein 1 of Brachypodium distachyon (Purple false brome).